The sequence spans 168 residues: Large ribosomal subunit protein uL10 (168 aa).

The protein belongs to the universal ribosomal protein uL10 family. Part of the ribosomal stalk of the 50S ribosomal subunit. The N-terminus interacts with L11 and the large rRNA to form the base of the stalk. The C-terminus forms an elongated spine to which L12 dimers bind in a sequential fashion forming a multimeric L10(L12)X complex.

In terms of biological role, forms part of the ribosomal stalk, playing a central role in the interaction of the ribosome with GTP-bound translation factors. This chain is Large ribosomal subunit protein uL10 (rplJ), found in Buchnera aphidicola subsp. Baizongia pistaciae (strain Bp).